Consider the following 224-residue polypeptide: Ribose-5-phosphate isomerase A (224 aa).

Residues 26 to 29 (TGST), 81 to 84 (DGAD), and 94 to 97 (KGGG) each bind substrate. Glu103 (proton acceptor) is an active-site residue. Lys121 contacts substrate.

This sequence belongs to the ribose 5-phosphate isomerase family. In terms of assembly, homodimer.

It catalyses the reaction aldehydo-D-ribose 5-phosphate = D-ribulose 5-phosphate. It participates in carbohydrate degradation; pentose phosphate pathway; D-ribose 5-phosphate from D-ribulose 5-phosphate (non-oxidative stage): step 1/1. In terms of biological role, catalyzes the reversible conversion of ribose-5-phosphate to ribulose 5-phosphate. The protein is Ribose-5-phosphate isomerase A of Listeria monocytogenes serovar 1/2a (strain ATCC BAA-679 / EGD-e).